Here is a 143-residue protein sequence, read N- to C-terminus: Hemoglobin subunit alpha-1 (143 aa).

Ser2 carries the N-acetylserine modification. The 142-residue stretch at Ser2–Arg143 folds into the Globin domain. An O2-binding site is contributed by His60. His89 contacts heme b.

Belongs to the globin family. In terms of assembly, hb 1 is a heterotetramer of two alpha-1 and two beta-1 chains. Hb 3 is a heterotetramer of two alpha-1 and two beta-2 chains. Red blood cells.

Functionally, involved in oxygen transport from gills to the various peripheral tissues. The polypeptide is Hemoglobin subunit alpha-1 (hba1) (Gadus morhua (Atlantic cod)).